Reading from the N-terminus, the 458-residue chain is Bone morphogenetic protein 3 (458 aa).

Residues 1 to 23 form the signal peptide; sequence MAECRPWLVLWVGCCGCLCLALG. Residues 24 to 348 constitute a propeptide that is removed on maturation; the sequence is ELLNDGLLAV…EQTLKKARRK (325 aa). Residue N107 is glycosylated (N-linked (GlcNAc...) asparagine). 2 disordered regions span residues 244-275 and 303-335; these read DSVV…KKRS and ERKP…SQTL. Residues 320-329 show a composition bias toward basic residues; it reads NKKKLRKGSR. Cystine bridges form between C356-C423, C385-C455, and C389-C457. N449 carries N-linked (GlcNAc...) asparagine glycosylation.

Belongs to the TGF-beta family. Homodimer. Can form heterodimers with ADMP, BMP-2-I and/or BMP-2-II, and DERRIERE.

It is found in the secreted. Dorsalizing factor. Antagonizes mesoderm formation by ventralizing BMPs. The sequence is that of Bone morphogenetic protein 3 (bmp3) from Xenopus laevis (African clawed frog).